We begin with the raw amino-acid sequence, 301 residues long: Small ribosomal subunit protein uS2 (301 aa).

This sequence belongs to the universal ribosomal protein uS2 family. As to quaternary structure, component of the small ribosomal subunit. Mature ribosomes consist of a small (40S) and a large (60S) subunit. The 40S subunit contains about 33 different proteins and 1 molecule of RNA (18S). The 60S subunit contains about 49 different proteins and 3 molecules of RNA (25S, 5.8S and 5S). Interacts with RPS21.

Its subcellular location is the cytoplasm. Functionally, required for the assembly and/or stability of the 40S ribosomal subunit. Required for the processing of the 20S rRNA-precursor to mature 18S rRNA in a late step of the maturation of 40S ribosomal subunits. This chain is Small ribosomal subunit protein uS2, found in Ajellomyces dermatitidis (strain ER-3 / ATCC MYA-2586) (Blastomyces dermatitidis).